The sequence spans 923 residues: Isoleucine--tRNA ligase (923 aa).

A 'HIGH' region motif is present at residues 57–67 (PYANGHIHIGH). Glu-560 lines the L-isoleucyl-5'-AMP pocket. Positions 601–605 (KMSKS) match the 'KMSKS' region motif. Lys-604 contacts ATP. Zn(2+) is bound by residues Cys-895, Cys-898, Cys-915, and Cys-918.

This sequence belongs to the class-I aminoacyl-tRNA synthetase family. IleS type 1 subfamily. As to quaternary structure, monomer. Zn(2+) serves as cofactor.

It localises to the cytoplasm. It carries out the reaction tRNA(Ile) + L-isoleucine + ATP = L-isoleucyl-tRNA(Ile) + AMP + diphosphate. Catalyzes the attachment of isoleucine to tRNA(Ile). As IleRS can inadvertently accommodate and process structurally similar amino acids such as valine, to avoid such errors it has two additional distinct tRNA(Ile)-dependent editing activities. One activity is designated as 'pretransfer' editing and involves the hydrolysis of activated Val-AMP. The other activity is designated 'posttransfer' editing and involves deacylation of mischarged Val-tRNA(Ile). This chain is Isoleucine--tRNA ligase, found in Geobacter sulfurreducens (strain ATCC 51573 / DSM 12127 / PCA).